A 113-amino-acid chain; its full sequence is Small ribosomal subunit protein uS17 (113 aa).

The protein belongs to the universal ribosomal protein uS17 family. As to quaternary structure, part of the 30S ribosomal subunit.

Its function is as follows. One of the primary rRNA binding proteins, it binds specifically to the 5'-end of 16S ribosomal RNA. The chain is Small ribosomal subunit protein uS17 from Pyrococcus furiosus (strain ATCC 43587 / DSM 3638 / JCM 8422 / Vc1).